The sequence spans 539 residues: Phenylalanine--tRNA ligase beta subunit (539 aa).

One can recognise a B5 domain in the interval 271-347; sequence LSPARWTVTT…KSYGYENLKA (77 aa). Mg(2+) is bound by residues Asp-325, Asp-331, Glu-334, and Asp-335.

It belongs to the phenylalanyl-tRNA synthetase beta subunit family. Type 2 subfamily. As to quaternary structure, tetramer of two alpha and two beta subunits. Mg(2+) is required as a cofactor.

It localises to the cytoplasm. The enzyme catalyses tRNA(Phe) + L-phenylalanine + ATP = L-phenylalanyl-tRNA(Phe) + AMP + diphosphate + H(+). The polypeptide is Phenylalanine--tRNA ligase beta subunit (Methanothrix thermoacetophila (strain DSM 6194 / JCM 14653 / NBRC 101360 / PT) (Methanosaeta thermophila)).